Consider the following 280-residue polypeptide: Phosphonates import ATP-binding protein PhnC 1 (280 aa).

The ABC transporter domain occupies 3-247 (FRLDAASVSY…LLRELYASES (245 aa)). ATP is bound at residue 36 to 43 (GPSGAGKT).

It belongs to the ABC transporter superfamily. Phosphonates importer (TC 3.A.1.9.1) family. The complex is composed of two ATP-binding proteins (PhnC), two transmembrane proteins (PhnE) and a solute-binding protein (PhnD).

It is found in the cell inner membrane. It catalyses the reaction phosphonate(out) + ATP + H2O = phosphonate(in) + ADP + phosphate + H(+). Part of the ABC transporter complex PhnCDE involved in phosphonates import. Responsible for energy coupling to the transport system. The polypeptide is Phosphonates import ATP-binding protein PhnC 1 (Cupriavidus necator (strain ATCC 17699 / DSM 428 / KCTC 22496 / NCIMB 10442 / H16 / Stanier 337) (Ralstonia eutropha)).